We begin with the raw amino-acid sequence, 157 residues long: Transcription antitermination protein NusB (157 aa).

It belongs to the NusB family.

In terms of biological role, involved in transcription antitermination. Required for transcription of ribosomal RNA (rRNA) genes. Binds specifically to the boxA antiterminator sequence of the ribosomal RNA (rrn) operons. In Xylella fastidiosa (strain 9a5c), this protein is Transcription antitermination protein NusB.